The primary structure comprises 346 residues: 4-amino-5-hydroxymethyl-2-methylpyrimidine phosphate synthase (346 aa).

Lys62 carries the post-translational modification N6-(pyridoxal phosphate)lysine. His66 is a catalytic residue. 114–117 (GEFG) contributes to the pyridoxal 5'-phosphate binding site. A CCCFC; essential for catalytic activity, may be the site of iron coordination motif is present at residues 194–198 (CCCFC).

It belongs to the NMT1/THI5 family. In terms of assembly, homodimer. It depends on Fe cation as a cofactor.

Its subcellular location is the cytoplasm. It is found in the nucleus. The enzyme catalyses N(6)-(pyridoxal phosphate)-L-lysyl-[4-amino-5-hydroxymethyl-2-methylpyrimidine phosphate synthase] + L-histidyl-[4-amino-5-hydroxymethyl-2-methylpyrimidine phosphate synthase] + 2 Fe(3+) + 4 H2O = L-lysyl-[4-amino-5-hydroxymethyl-2-methylpyrimidine phosphate synthase] + (2S)-2-amino-5-hydroxy-4-oxopentanoyl-[4-amino-5-hydroxymethyl-2-methylpyrimidine phosphate synthase] + 4-amino-2-methyl-5-(phosphooxymethyl)pyrimidine + 3-oxopropanoate + 2 Fe(2+) + 2 H(+). The protein operates within cofactor biosynthesis; thiamine diphosphate biosynthesis. In terms of biological role, responsible for the formation of the pyrimidine heterocycle in the thiamine biosynthesis pathway. Catalyzes the formation of hydroxymethylpyrimidine phosphate (HMP-P) from histidine and pyridoxal phosphate (PLP). The protein uses PLP and the active site histidine to form HMP-P, generating an inactive enzyme. The enzyme can only undergo a single turnover, which suggests it is a suicide enzyme. This is 4-amino-5-hydroxymethyl-2-methylpyrimidine phosphate synthase from Schizosaccharomyces pombe (strain 972 / ATCC 24843) (Fission yeast).